We begin with the raw amino-acid sequence, 213 residues long: Thiamine-phosphate synthase (213 aa).

4-amino-2-methyl-5-(diphosphooxymethyl)pyrimidine is bound by residues 39–43 and N71; that span reads QLREK. Residues D72 and D91 each contribute to the Mg(2+) site. S110 is a binding site for 4-amino-2-methyl-5-(diphosphooxymethyl)pyrimidine. 136-138 provides a ligand contact to 2-[(2R,5Z)-2-carboxy-4-methylthiazol-5(2H)-ylidene]ethyl phosphate; it reads TGT. K139 serves as a coordination point for 4-amino-2-methyl-5-(diphosphooxymethyl)pyrimidine. 2-[(2R,5Z)-2-carboxy-4-methylthiazol-5(2H)-ylidene]ethyl phosphate-binding positions include G166 and 186–187; that span reads VS.

This sequence belongs to the thiamine-phosphate synthase family. Mg(2+) is required as a cofactor.

It catalyses the reaction 2-[(2R,5Z)-2-carboxy-4-methylthiazol-5(2H)-ylidene]ethyl phosphate + 4-amino-2-methyl-5-(diphosphooxymethyl)pyrimidine + 2 H(+) = thiamine phosphate + CO2 + diphosphate. It carries out the reaction 2-(2-carboxy-4-methylthiazol-5-yl)ethyl phosphate + 4-amino-2-methyl-5-(diphosphooxymethyl)pyrimidine + 2 H(+) = thiamine phosphate + CO2 + diphosphate. The catalysed reaction is 4-methyl-5-(2-phosphooxyethyl)-thiazole + 4-amino-2-methyl-5-(diphosphooxymethyl)pyrimidine + H(+) = thiamine phosphate + diphosphate. It functions in the pathway cofactor biosynthesis; thiamine diphosphate biosynthesis; thiamine phosphate from 4-amino-2-methyl-5-diphosphomethylpyrimidine and 4-methyl-5-(2-phosphoethyl)-thiazole: step 1/1. Condenses 4-methyl-5-(beta-hydroxyethyl)thiazole monophosphate (THZ-P) and 2-methyl-4-amino-5-hydroxymethyl pyrimidine pyrophosphate (HMP-PP) to form thiamine monophosphate (TMP). The sequence is that of Thiamine-phosphate synthase from Clostridium botulinum (strain Eklund 17B / Type B).